The following is a 295-amino-acid chain: Protein FAM221A (295 aa).

Residues S244–P295 form a disordered region. Residues Y266–E278 show a composition bias toward basic and acidic residues.

It belongs to the FAM221 family.

This is Protein FAM221A (fam221a) from Xenopus laevis (African clawed frog).